Reading from the N-terminus, the 200-residue chain is Protein DMP7 (200 aa).

4 helical membrane-spanning segments follow: residues 37 to 57 (LSNL…PVLT), 69 to 89 (WLTC…SFTD), 129 to 149 (ILDF…SMFD), and 167 to 187 (ILTS…LAFP).

The protein belongs to the plant DMP1 protein family. Expressed in leaves, stems, flowers, siliques and roots, especially in the vasculature.

It localises to the endoplasmic reticulum membrane. In terms of biological role, involved in membrane remodeling. This is Protein DMP7 from Arabidopsis thaliana (Mouse-ear cress).